Reading from the N-terminus, the 429-residue chain is 3-phosphoshikimate 1-carboxyvinyltransferase (429 aa).

3-phosphoshikimate-binding residues include Lys11, Ser12, and Arg16. Lys11 serves as a coordination point for phosphoenolpyruvate. Residues Gly82 and Arg110 each contribute to the phosphoenolpyruvate site. 3-phosphoshikimate contacts are provided by Ser155, Gln157, Asp302, and Lys329. Residue Gln157 coordinates phosphoenolpyruvate. Asp302 serves as the catalytic Proton acceptor. Phosphoenolpyruvate-binding residues include Arg333 and Arg385.

Belongs to the EPSP synthase family. As to quaternary structure, monomer.

Its subcellular location is the cytoplasm. The enzyme catalyses 3-phosphoshikimate + phosphoenolpyruvate = 5-O-(1-carboxyvinyl)-3-phosphoshikimate + phosphate. It participates in metabolic intermediate biosynthesis; chorismate biosynthesis; chorismate from D-erythrose 4-phosphate and phosphoenolpyruvate: step 6/7. Catalyzes the transfer of the enolpyruvyl moiety of phosphoenolpyruvate (PEP) to the 5-hydroxyl of shikimate-3-phosphate (S3P) to produce enolpyruvyl shikimate-3-phosphate and inorganic phosphate. The polypeptide is 3-phosphoshikimate 1-carboxyvinyltransferase (Helicobacter pylori (strain HPAG1)).